Consider the following 160-residue polypeptide: Ubiquitin-like protein 4A (160 aa).

The Ubiquitin-like domain maps to 1–76; it reads MQLTVKALQG…LNLVVKPLEK (76 aa). Lys48 participates in a covalent cross-link: Glycyl lysine isopeptide (Lys-Gly) (interchain with G-Cter in ubiquitin). Residues 99–141 form a required and sufficient for interaction with BAG6 region; the sequence is WQLIAKVLARHFSAADASRVLDQLQRDYERSLSRLTLDDIERL.

Component of the BAG6/BAT3 complex, at least composed of BAG6, UBL4A and GET4/TRC35. Interacts with BAG6; the interaction is direct and required for UBL4A protein stability. Interacts with USP13; may be indirect via BAG6. In terms of processing, polyubiquitinated. Ubiquitination by AMFR and deubiquitination by USP13 may regulate the interaction between the BAG6/BAT complex and SGTA and therefore may regulate client proteins fate.

The protein localises to the cytoplasm. It is found in the cytosol. Its subcellular location is the nucleus. Its function is as follows. As part of a cytosolic protein quality control complex, the BAG6/BAT3 complex, maintains misfolded and hydrophobic patches-containing proteins in a soluble state and participates in their proper delivery to the endoplasmic reticulum or alternatively can promote their sorting to the proteasome where they undergo degradation. The BAG6/BAT3 complex is involved in the post-translational delivery of tail-anchored/type II transmembrane proteins to the endoplasmic reticulum membrane. Recruited to ribosomes, it interacts with the transmembrane region of newly synthesized tail-anchored proteins and together with SGTA and ASNA1 mediates their delivery to the endoplasmic reticulum. Client proteins that cannot be properly delivered to the endoplasmic reticulum are ubiquitinated and sorted to the proteasome. Similarly, the BAG6/BAT3 complex also functions as a sorting platform for proteins of the secretory pathway that are mislocalized to the cytosol either delivering them to the proteasome for degradation or to the endoplasmic reticulum. The BAG6/BAT3 complex also plays a role in the endoplasmic reticulum-associated degradation (ERAD), a quality control mechanism that eliminates unwanted proteins of the endoplasmic reticulum through their retrotranslocation to the cytosol and their targeting to the proteasome. It maintains these retrotranslocated proteins in an unfolded yet soluble state condition in the cytosol to ensure their proper delivery to the proteasome. The chain is Ubiquitin-like protein 4A (UBL4A) from Rhinolophus ferrumequinum (Greater horseshoe bat).